A 241-amino-acid chain; its full sequence is Uridylate kinase (241 aa).

15–18 (KISG) is an ATP binding site. The tract at residues 23–28 (GDQGFG) is involved in allosteric activation by GTP. Glycine 57 lines the UMP pocket. Positions 58 and 62 each coordinate ATP. UMP is bound by residues aspartate 77 and 138–145 (TGNPYFTT). ATP is bound by residues threonine 165, tyrosine 171, and aspartate 174.

This sequence belongs to the UMP kinase family. In terms of assembly, homohexamer.

The protein resides in the cytoplasm. The catalysed reaction is UMP + ATP = UDP + ADP. The protein operates within pyrimidine metabolism; CTP biosynthesis via de novo pathway; UDP from UMP (UMPK route): step 1/1. Its activity is regulated as follows. Allosterically activated by GTP. Inhibited by UTP. In terms of biological role, catalyzes the reversible phosphorylation of UMP to UDP. This is Uridylate kinase from Paracoccus zeaxanthinifaciens.